The primary structure comprises 4065 residues: Polyketide synthase-nonribosomal peptide synthetase pyiS (4065 aa).

The Ketosynthase family 3 (KS3) domain maps to 6-440 (SEPVAIIGTG…GANCHAILEA (435 aa)). Active-site for beta-ketoacyl synthase activity residues include cysteine 179, histidine 314, and histidine 360. Residues 552–875 (IFTGQGAQWP…PYTGVLSRGK (324 aa)) are acyl transferase. The interval 950–1087 (NELLGRQILD…CDVLVTYGDS (138 aa)) is N-terminal hotdog fold. The 311-residue stretch at 950–1260 (NELLGRQILD…TQPLFNPTEA (311 aa)) folds into the PKS/mFAS DH domain. The segment at 951-1254 (ELLGRQILDG…QVEGLQTQPL (304 aa)) is dehydratase (DH) domain. Histidine 982 functions as the Proton acceptor; for dehydratase activity in the catalytic mechanism. The C-terminal hotdog fold stretch occupies residues 1102–1260 (EYFMLGVESD…TQPLFNPTEA (159 aa)). Residue aspartate 1166 is the Proton donor; for dehydratase activity of the active site. Positions 1409–1593 (AHGMPRYTKY…KQTGFSGIDT (185 aa)) are methyltransferase (MT) domain. A ketoreductase (KR)domain region spans residues 2129 to 2302 (TYWLVGLSGT…NASVVHIGAI (174 aa)). One can recognise a Carrier 1 domain in the interval 2411–2492 (INSAEVYEII…EILETAQQLL (82 aa)). Serine 2452 bears the O-(pantetheine 4'-phosphoryl)serine mark. The interval 2497-2561 (LPKMDPNDKS…GAKKGETVSK (65 aa)) is disordered. Residues 2551–2561 (SGAKKGETVSK) are compositionally biased toward basic and acidic residues. The tract at residues 2645 to 3076 (SKKTPISFAQ…FSRNQALRLA (432 aa)) is condensation. The adenylation stretch occupies residues 3112 to 3516 (DIAKQKSHSL…RLLLEGRIAD (405 aa)). Residues 3634 to 3714 (QDLNDTESRL…DMAALVDELS (81 aa)) form the Carrier 2 domain. Position 3674 is an O-(pantetheine 4'-phosphoryl)serine (serine 3674). A reductase-like region spans residues 3760-3975 (LTGSTGFLGR…LDFISVDEAA (216 aa)).

It belongs to the NRP synthetase family.

It functions in the pathway mycotoxin biosynthesis. Functionally, hybrid PKS-NRPS synthetase; part of the gene cluster that mediates the biosynthesis of the mycotoxin pyrichalasin H, a tyrosine-derived cytochalasan that inhibits the growth of rice seedlings, but also inhibits lymphocyte capping and actin polymerization and alters cell morphology. Pyrichalasin H is indicated as the responsible agent for the genus-specific pathogenicity of M.grisea toward crabgrass. The first step in the pathway is catalyzed by the O-methyltransferase pyiA which methylates free tyrosine to generate the precursor O-methyltyrosine. The hybrid PKS-NRPS pyiS, assisted by the enoyl reductase pyiC, are responsible for fusion of the O-methyltyrosine precursor and the polyketide backbone. The polyketide synthase module (PKS) of pyiS is responsible for the synthesis of the polyketide backbone and the downstream nonribosomal peptide synthetase (NRPS) amidates the carboxyl end of the polyketide with the O-methyltyrosine precursor. As the NRPS A-domain demonstrates substrate tolerance, pyiS can also use phenylalanine, tyrosine and even para-chlorophenylalanine as amino acid precursor, which leads to the production of novel cytochalasans, including halogenated cytochalasans. Because pyiS lacks a designated enoylreductase (ER) domain, the required activity is provided the enoyl reductase pyiC. Reduction by the hydrolyase pyiE leads to 1,5-dihydropyrrolone, which is substrate for dehydration and intra-molecular Diels-Alder cyclization by the Diels-Alderase pyiF to yield the required isoindolone-fused macrocycle. The tailoring cytochrome P450 monooxygenases piyD and piyG catalyze the hydroxylation at C-18 and C-7, respectivily, whereas the short-chain dehydrogenase/reductase pyiH reduces the carbonyl at C-21 in preparation for the transfer of an acetyl group by the acetyltransferase pyiB. These 3 reactions whose order is not clear yet, lead to the production of O-methylpyrichalasin J, a deacetylated pyrichalasin H. Finally, pyiB to converts O-methylpyrichalasin J into the final product pyrichalasin H via acetylation of C-21. This is Polyketide synthase-nonribosomal peptide synthetase pyiS from Pyricularia grisea (Crabgrass-specific blast fungus).